A 219-amino-acid chain; its full sequence is Transmembrane emp24 domain-containing protein 10 (219 aa).

An N-terminal signal peptide occupies residues 1 to 31 (MSGLFGPLSRPGPLPSAWLFLLLLGPSSVLG). The required for interaction with STX17 stretch occupies residues 1 to 142 (MSGLFGPLSR…KNYEEIAKVE (142 aa)). Over 32–185 (ISFHLPVNSR…RDTNESTNTR (154 aa)) the chain is Lumenal. Residues 41–193 (RKCLREEIHK…TRVLYFSIFS (153 aa)) form the GOLD domain. Positions 147-178 (LEVELRRLEDLSESIVNDFAYMKKREEEMRDT) are required for TMED10 and TMED2 cis-Golgi network localization. 2 positions are modified to dimethylated arginine: Arg171 and Arg176. Asn179 carries an N-linked (GlcNAc...) asparagine glycan. Residues 186–206 (VLYFSIFSMFCLIGLATWQVF) traverse the membrane as a helical segment. Positions 204–219 (QVFYLRRFFKAKKLIE) are interaction with COPG1. The Cytoplasmic segment spans residues 207-219 (YLRRFFKAKKLIE). The interaction with ARF1 and IL1B stretch occupies residues 207–219 (YLRRFFKAKKLIE). The short motif at 211–212 (FF) is the COPII vesicle coat-binding element. The COPI vesicle coat-binding motif lies at 211-219 (FFKAKKLIE).

It belongs to the EMP24/GP25L family. Predominantly dimeric and to a lesser extent monomeric in the ER. Monomer and dimer in ERGIC and cis-Golgi network. Forms homooligomer (via GOLD domain); the assembly is promoted by direct binding with leaderless cargos and may form a protein channel that facilitates cargo entry into the ERGIC. Forms heterooligomeric complexes with other members of the p24 family such as TMED2, TMED7 and TMED9. Interacts (via GOLD domain) with TMED2 (via GOLD domain); the complex is required for export of TMED10 from the ER to the cis-Golgi network; the complex is proposed to be involved in cis-Golgi network dynamics and / or biogenesis. Associates with the COPI vesicle coat subunits (coatomer). Tetramerization of the cytoplasmic domain at the Golgi membrane in vitro; the complex is proposed to interact with COPI coatomer and induce budding of the vesicles. Interacts with COPG1; the interaction involves TMED10 homodimer. Interacts with ARF1 (GDP-bound); the interaction probably involves a TMED10 oligomer. Interacts with SEC23A, SEC24B, SEC24C and SEC24D components of the coat protein complex II/COPII, indicative of an association of TMED10 with the COPII vesicle coat. Interacts with CD59. Interacts with MPPE1/PGAP5; the complex might recruit and sort GPI-anchored proteins to the ER-exit site, or the interaction might lead to recycling of PGAP5 between the ER and the Golgi. Interacts with F2LR1/PAR2. Interacts with KDELR2/ERD2; the interaction is disrupted by KDELR2 ligand. Found in a complex composed at least of SURF4, TMED2 and TMED10. Associates with the presenilin-dependent gamma-secretase complex. Interacts with STX17; the interaction is direct. Interacts with IL-1; the interaction is direct. Interacts with RAB21 (active GTP-bound form); the interaction is indirect and regulates TMED10 abundance and localization at the Golgi.

The protein localises to the endoplasmic reticulum membrane. It is found in the endoplasmic reticulum-Golgi intermediate compartment membrane. It localises to the golgi apparatus membrane. Its subcellular location is the golgi apparatus. The protein resides in the cis-Golgi network membrane. The protein localises to the trans-Golgi network membrane. It is found in the cytoplasmic vesicle. It localises to the secretory vesicle membrane. Its subcellular location is the cell membrane. The protein resides in the melanosome. In terms of biological role, cargo receptor involved in protein vesicular trafficking and quality control in the endoplasmic reticulum (ER) and Golgi. The p24 protein family is a group of transmembrane proteins that bind coat protein complex I/COPI and coat protein complex II/COPII involved in vesicular trafficking between the membranes. Acts at the lumenal side for incorporation of secretory cargo molecules into transport vesicles and involved in vesicle coat formation at the cytoplasmic side. Mainly functions in the early secretory pathway and cycles between the ER, ER-Golgi intermediate compartment (ERGIC) and Golgi, mediating cargo transport through COPI and COPII-coated vesicles. In COPII vesicle-mediated anterograde transport, involved in the transport of GPI-anchored proteins by acting together with TMED2 as their cargo receptor; the function specifically implies SEC24C and SEC24D of the COPII vesicle coat and lipid raft-like microdomains of the ER. Recognizes GPI anchors structural remodeled in the ER by the GPI inositol-deacylase/PGAP1 and the metallophosphoesterase MPPE1/PGAP5. In COPI vesicle-mediated retrograde transport, involved in the biogenesis of COPI vesicles and vesicle coat recruitment. Involved in trafficking of amyloid beta A4 protein and soluble APP-beta release (independent from the modulation of gamma-secretase activity). Involved in the KDELR2-mediated retrograde transport of the toxin A subunit (CTX-A-K63)together with COPI and the COOH terminus of KDELR2. On Golgi membranes, acts as a primary receptor for ARF1-GDP, a GTP-binding protein involved in COPI-vesicle formation. Increases coatomer-dependent GTPase-activating activity of ARFGAP2 which mediates the hydrolysis of ARF1-bound GTP and therefore modulates protein trafficking from the Golgi apparatus. Involved in the exocytic trafficking of G protein-coupled receptors F2LR1/PAR2 (trypsin and tryspin-like enzyme receptor), OPRM1 (opioid receptor) and P2RY4 (UTD and UDP receptor) from the Golgi to the plasma membrane, thus contributing to receptor resensitization. In addition to its cargo receptor activity, may also act as a protein channel after oligomerization, facilitating the post-translational entry of leaderless cytoplasmic cargo into the ERGIC. Involved in the translocation into ERGIC, the vesicle entry and the secretion of leaderless cargos (lacking the secretion signal sequence), including the mature form of interleukin 1/IL-1 family members, the alpha-crystallin B chain HSPB5, the carbohydrate-binding proteins galectin-1/LGALS1 and galectin-3/LGALS3, the microtubule-associated protein Tau/MAPT, and the annexin A1/ANXA1; the translocation process is dependent on cargo protein unfolding and enhanced by chaperones HSP90AB1 and HSP90B1/GRP9. Could also associates with the presenilin-dependent gamma-secretase complex in order to regulate gamma-cleavages of the amyloid beta A4 protein to yield amyloid-beta 40/Abeta40. In Mus musculus (Mouse), this protein is Transmembrane emp24 domain-containing protein 10.